The chain runs to 339 residues: Caspase drICE (339 aa).

A propeptide spanning residues 1 to 28 is cleaved from the precursor; it reads MDATNNGESADQVGIRVGNPEQPNDHTD. The segment at 1 to 45 is disordered; it reads MDATNNGESADQVGIRVGNPEQPNDHTDALGSVGSGGAGSSGLVA. Active-site residues include His169 and Cys211. A propeptide spanning residues 218–230 is cleaved from the precursor; it reads GGVTMQRSQTETD.

The protein belongs to the peptidase C14A family. In terms of assembly, heterotetramer that consists of two anti-parallel arranged heterodimers, each one formed by a 21 kDa (p21) and a 12 kDa (p12) subunit. Inactive pro-form can homodimerize. Dronc and Drice can form a stable complex. Interacts with Diap2 (via BIR3 domain) to form a stable complex. May interact with some isoforms of Dark.

Its activity is regulated as follows. Zymogen activated by proteolytic cleavage; cleaved by the initiator caspase Dronc upon apoptosis induction. Involved in the activation cascade of caspases responsible for apoptosis execution. Acts downstream of rpr. Cleaves baculovirus p35 and lamin DmO in vitro. The polypeptide is Caspase drICE (Drice) (Drosophila melanogaster (Fruit fly)).